Consider the following 245-residue polypeptide: Ribonuclease 3 (245 aa).

The 129-residue stretch at 18 to 146 (LSKFLENLSI…FVGAIYLDSG (129 aa)) folds into the RNase III domain. Glu-59 contributes to the Mg(2+) binding site. Asp-63 is an active-site residue. Mg(2+) contacts are provided by Asp-132 and Glu-135. Glu-135 is an active-site residue. The 70-residue stretch at 173 to 242 (DYKSLLQEYV…AEVALKAMEN (70 aa)) folds into the DRBM domain.

It belongs to the ribonuclease III family. As to quaternary structure, homodimer. Mg(2+) serves as cofactor.

The protein resides in the cytoplasm. The enzyme catalyses Endonucleolytic cleavage to 5'-phosphomonoester.. In terms of biological role, digests double-stranded RNA. Involved in the processing of primary rRNA transcript to yield the immediate precursors to the large and small rRNAs (23S and 16S). Processes some mRNAs, and tRNAs when they are encoded in the rRNA operon. Processes pre-crRNA and tracrRNA of type II CRISPR loci if present in the organism. The protein is Ribonuclease 3 of Borreliella burgdorferi (strain ATCC 35210 / DSM 4680 / CIP 102532 / B31) (Borrelia burgdorferi).